Here is a 179-residue protein sequence, read N- to C-terminus: MVSFFMEHALTMILIILIINVVYVTLFTVRMIFTLKNQRYLAATVSMIEIIVYVLGLSLVLDNLDRIENLIAYAVGYGIGVITGMKVEEKLALGYITVNVITKEYEPDIPNTLRDKGYGVTNWVAYGREGERLMMEILTSRKSEADLYATIKKLDPKAFIISHEPKTFFGGFWVKGIRR.

A run of 3 helical transmembrane segments spans residues 9-29, 41-61, and 67-87; these read ALTM…LFTV, LAAT…SLVL, and IENL…GMKV.

Belongs to the UPF0316 family.

It is found in the cell membrane. In Halalkalibacterium halodurans (strain ATCC BAA-125 / DSM 18197 / FERM 7344 / JCM 9153 / C-125) (Bacillus halodurans), this protein is UPF0316 protein BH0621.